Here is a 196-residue protein sequence, read N- to C-terminus: Molybdopterin synthase catalytic subunit (196 aa).

Substrate contacts are provided by residues 110 to 111, K126, and 133 to 135; these read HR and KKE. The interval 142-196 is disordered; sequence GGIWRANRDGAVGERVDEDEEKKKPDMGPHGPILRPSRPGERGHGPVVRNHQLGS. Basic and acidic residues predominate over residues 147-168; sequence ANRDGAVGERVDEDEEKKKPDM.

It belongs to the MoaE family. MOCS2B subfamily. In terms of assembly, heterotetramer; composed of 2 small (MOCS2A) and 2 large (MOCS2B) subunits.

Its subcellular location is the cytoplasm. It catalyses the reaction 2 [molybdopterin-synthase sulfur-carrier protein]-C-terminal-Gly-aminoethanethioate + cyclic pyranopterin phosphate + H2O = molybdopterin + 2 [molybdopterin-synthase sulfur-carrier protein]-C-terminal Gly-Gly + 2 H(+). It participates in cofactor biosynthesis; molybdopterin biosynthesis. In terms of biological role, catalytic subunit of the molybdopterin synthase complex, a complex that catalyzes the conversion of precursor Z into molybdopterin. Acts by mediating the incorporation of 2 sulfur atoms from thiocarboxylated MOCS2A into precursor Z to generate a dithiolene group. The polypeptide is Molybdopterin synthase catalytic subunit (Sclerotinia sclerotiorum (strain ATCC 18683 / 1980 / Ss-1) (White mold)).